The sequence spans 156 residues: Ribosomal RNA large subunit methyltransferase H (156 aa).

Residues L73, G104, and 123-128 (LSALTL) each bind S-adenosyl-L-methionine.

This sequence belongs to the RNA methyltransferase RlmH family. As to quaternary structure, homodimer.

The protein resides in the cytoplasm. It catalyses the reaction pseudouridine(1915) in 23S rRNA + S-adenosyl-L-methionine = N(3)-methylpseudouridine(1915) in 23S rRNA + S-adenosyl-L-homocysteine + H(+). Its function is as follows. Specifically methylates the pseudouridine at position 1915 (m3Psi1915) in 23S rRNA. This is Ribosomal RNA large subunit methyltransferase H from Shewanella piezotolerans (strain WP3 / JCM 13877).